The following is a 60-amino-acid chain: Large ribosomal subunit protein uL30 (60 aa).

The protein belongs to the universal ribosomal protein uL30 family. In terms of assembly, part of the 50S ribosomal subunit.

This chain is Large ribosomal subunit protein uL30, found in Streptomyces avermitilis (strain ATCC 31267 / DSM 46492 / JCM 5070 / NBRC 14893 / NCIMB 12804 / NRRL 8165 / MA-4680).